Reading from the N-terminus, the 276-residue chain is Phosphatidylglycerol--prolipoprotein diacylglyceryl transferase (276 aa).

The next 7 membrane-spanning stretches (helical) occupy residues 17-37 (FGPF…VLGW), 59-79 (FLSW…ILFY), 94-114 (VWDG…AILI), 132-152 (VPVP…GELW), 177-197 (PSEL…LLIA), 208-225 (GYLG…RTTA), and 235-255 (LGYL…MIVI). Residue Arg142 participates in a 1,2-diacyl-sn-glycero-3-phospho-(1'-sn-glycerol) binding.

Belongs to the Lgt family.

The protein resides in the cell inner membrane. The catalysed reaction is L-cysteinyl-[prolipoprotein] + a 1,2-diacyl-sn-glycero-3-phospho-(1'-sn-glycerol) = an S-1,2-diacyl-sn-glyceryl-L-cysteinyl-[prolipoprotein] + sn-glycerol 1-phosphate + H(+). The protein operates within protein modification; lipoprotein biosynthesis (diacylglyceryl transfer). In terms of biological role, catalyzes the transfer of the diacylglyceryl group from phosphatidylglycerol to the sulfhydryl group of the N-terminal cysteine of a prolipoprotein, the first step in the formation of mature lipoproteins. In Acidiphilium cryptum (strain JF-5), this protein is Phosphatidylglycerol--prolipoprotein diacylglyceryl transferase.